Consider the following 613-residue polypeptide: DNA mismatch repair protein MutL (613 aa).

This sequence belongs to the DNA mismatch repair MutL/HexB family.

Its function is as follows. This protein is involved in the repair of mismatches in DNA. It is required for dam-dependent methyl-directed DNA mismatch repair. May act as a 'molecular matchmaker', a protein that promotes the formation of a stable complex between two or more DNA-binding proteins in an ATP-dependent manner without itself being part of a final effector complex. The protein is DNA mismatch repair protein MutL of Janthinobacterium sp. (strain Marseille) (Minibacterium massiliensis).